The primary structure comprises 679 residues: DNA ligase (679 aa).

Residues 86-90 (DEAYD) and 129-130 (ST) each bind NAD(+). Lysine 167 serves as the catalytic N6-AMP-lysine intermediate. Residues arginine 183, glutamate 214, and lysine 326 each contribute to the NAD(+) site. Residues cysteine 417, cysteine 420, cysteine 433, and cysteine 439 each contribute to the Zn(2+) site. The 81-residue stretch at 599–679 (GEKSPISGKT…EAYRQLVSLD (81 aa)) folds into the BRCT domain.

This sequence belongs to the NAD-dependent DNA ligase family. LigA subfamily. The cofactor is Mg(2+). Mn(2+) serves as cofactor.

The enzyme catalyses NAD(+) + (deoxyribonucleotide)n-3'-hydroxyl + 5'-phospho-(deoxyribonucleotide)m = (deoxyribonucleotide)n+m + AMP + beta-nicotinamide D-nucleotide.. Functionally, DNA ligase that catalyzes the formation of phosphodiester linkages between 5'-phosphoryl and 3'-hydroxyl groups in double-stranded DNA using NAD as a coenzyme and as the energy source for the reaction. It is essential for DNA replication and repair of damaged DNA. This is DNA ligase from Desulfotalea psychrophila (strain LSv54 / DSM 12343).